We begin with the raw amino-acid sequence, 282 residues long: HTH-type transcriptional activator RhaR (282 aa).

Residues 179 to 277 (DKLITALANS…GMTPSQWRHL (99 aa)) form the HTH araC/xylS-type domain. 2 DNA-binding regions (H-T-H motif) span residues 196 to 217 (DAFC…RAQT) and 244 to 267 (ISEI…TRET).

In terms of assembly, binds DNA as a dimer.

Its subcellular location is the cytoplasm. Its function is as follows. Activates expression of the rhaSR operon in response to L-rhamnose. In Salmonella agona (strain SL483), this protein is HTH-type transcriptional activator RhaR.